A 539-amino-acid chain; its full sequence is Protein Wnt-4 (539 aa).

Residues 1 to 21 form the signal peptide; that stretch reads MPSPTGVFVLMILTHLSFGLG. Residues 34 to 77 are disordered; the sequence is QNGDLDSSNPAIHHQQHQQHQQHQQHQQHQSNHNLNNGNMNSTI. Positions 51–74 are enriched in low complexity; that stretch reads QQHQQHQQHQQHQSNHNLNNGNMN. N-linked (GlcNAc...) asparagine glycans are attached at residues Asn-74 and Asn-284. Disulfide bonds link Cys-274/Cys-285, Cys-322/Cys-330, Cys-332/Cys-349, Cys-397/Cys-411, and Cys-399/Cys-406. Ser-403 carries O-palmitoleoyl serine; by PORCN lipidation. The N-linked (GlcNAc...) asparagine glycan is linked to Asn-419. The tract at residues 436-463 is disordered; that stretch reads APNQRSMRQVSSSRMKKPKQRRKKPQQS. Residues 439–448 show a composition bias toward low complexity; the sequence is QRSMRQVSSS. Residues 449–460 show a composition bias toward basic residues; the sequence is RMKKPKQRRKKP. 6 cysteine pairs are disulfide-bonded: Cys-478/Cys-497, Cys-486/Cys-492, Cys-496/Cys-538, Cys-512/Cys-529, Cys-514/Cys-526, and Cys-521/Cys-522.

Belongs to the Wnt family. Post-translationally, palmitoleoylated by porcupine. The lipid group functions as a sorting signal, targeting the ligand to polarized vesicles that transport Wnt4 to unique sites at the cell surface. Depalmitoleoylated by notum, leading to inhibit Wnt signaling pathway.

Its subcellular location is the secreted. The protein resides in the extracellular space. It localises to the extracellular matrix. Its function is as follows. Binds as a ligand to a family of frizzled seven-transmembrane receptors and acts through a cascade of genes on the nucleus. Acts downstream of homeotic complex genes in the visceral mesoderm and is required for embryonic segmentation. Also required for cell movement and FAK regulation during ovarian morphogenesis. The chain is Protein Wnt-4 (Wnt4) from Drosophila melanogaster (Fruit fly).